A 217-amino-acid chain; its full sequence is UPF0319 protein HS_1349 (217 aa).

Positions 1-21 are cleaved as a signal peptide; the sequence is MKFSFAALASAMLLTSTAAFA.

The protein belongs to the UPF0319 family.

The sequence is that of UPF0319 protein HS_1349 from Histophilus somni (strain 129Pt) (Haemophilus somnus).